The following is a 150-amino-acid chain: Transcriptional regulator MraZ (150 aa).

2 SpoVT-AbrB domains span residues 11–53 (TYTP…PFDE) and 82–125 (AVDQ…NKDT).

The protein belongs to the MraZ family. In terms of assembly, forms oligomers.

It localises to the cytoplasm. The protein resides in the nucleoid. This is Transcriptional regulator MraZ from Bifidobacterium longum (strain NCC 2705).